Consider the following 61-residue polypeptide: Putative neurotoxin-D (61 aa).

The N-terminal stretch at 1 to 19 (MRTTVAILLVLFALSAILA) is a signal peptide. Intrachain disulfides connect C31–C51, C37–C56, and C39–C58.

In terms of tissue distribution, expressed by the venom gland.

Its subcellular location is the secreted. The protein is Putative neurotoxin-D of Lychas mucronatus (Chinese swimming scorpion).